The following is a 381-amino-acid chain: 6-oxocyclohex-1-ene-1-carbonyl-CoA hydrolase (381 aa).

This sequence belongs to the enoyl-CoA hydratase/isomerase family. In terms of assembly, homohexamer.

The enzyme catalyses 6-oxocyclohex-1-ene-1-carbonyl-CoA + 2 H2O = 3-hydroxy-6-carboxyhexanoyl-CoA + H(+). It functions in the pathway aromatic compound metabolism; benzoyl-CoA degradation. Involved in the central benzoyl-CoA catabolism. Catalyzes the addition of one molecule of water to the double bond and the hydrolytic cleavage of C-C bond in the alicyclic ring, 6-oxocyclohex-1-ene-1-carbonyl-CoA (6-OCH-CoA) to yield 3-hydroxypimelyl-CoA. This is 6-oxocyclohex-1-ene-1-carbonyl-CoA hydrolase from Geobacter metallireducens (strain ATCC 53774 / DSM 7210 / GS-15).